Consider the following 376-residue polypeptide: PqqA peptide cyclase (376 aa).

The region spanning 4 to 219 (VPPPLSVLLE…VETARRSLGD (216 aa)) is the Radical SAM core domain. [4Fe-4S] cluster is bound by residues cysteine 18, cysteine 22, and cysteine 25.

Belongs to the radical SAM superfamily. PqqE family. In terms of assembly, interacts with PqqD. The interaction is necessary for activity of PqqE. [4Fe-4S] cluster is required as a cofactor.

The catalysed reaction is [PQQ precursor protein] + S-adenosyl-L-methionine = E-Y cross-linked-[PQQ precursor protein] + 5'-deoxyadenosine + L-methionine + H(+). The protein operates within cofactor biosynthesis; pyrroloquinoline quinone biosynthesis. Catalyzes the cross-linking of a glutamate residue and a tyrosine residue in the PqqA protein as part of the biosynthesis of pyrroloquinoline quinone (PQQ). This Xanthomonas campestris pv. campestris (strain B100) protein is PqqA peptide cyclase.